Consider the following 179-residue polypeptide: MPRDEMEACELGDGEGYQPLRLPRVQGKLEEINPIVAAEVAALERRDRSDADYEKVKMLYVIYLRVHEIYDDQARIRLGVRRKKHLGDLTASRGAGLRSFEALSSMIPLPPETGEFDTGGTSSSVRSASGASGGAASTAASGGSASAAASGASGGSASQSDVSSRSRSQQAPGTKGKKQ.

The tract at residues 107–179 (IPLPPETGEF…QAPGTKGKKQ (73 aa)) is disordered. A compositionally biased stretch (low complexity) spans 118-171 (TGGTSSSVRSASGASGGAASTAASGGSASAAASGASGGSASQSDVSSRSRSQQA).

This sequence belongs to the herpesviridae small capsomere-interacting protein family. Interacts with the major capsid protein/MCP.

The protein resides in the virion. It localises to the host nucleus. Participates in the assembly of the infectious particles by decorating the outer surface of the capsid shell and thus forming a layer between the capsid and the tegument. Complexes composed of the major capsid protein and small capsomere-interacting protein/SCP assemble together in the host cytoplasm and are translocated to the nucleus, where they accumulate and participate in capsid assembly. In Equine herpesvirus 2 (strain 86/87) (EHV-2), this protein is Small capsomere-interacting protein.